We begin with the raw amino-acid sequence, 241 residues long: ATP synthase subunit a (241 aa).

The next 5 membrane-spanning stretches (helical) occupy residues 30 to 50, 91 to 111, 128 to 148, 193 to 213, and 214 to 234; these read GQVF…ISVG, FIGT…LIPW, INTT…AGLS, LVVG…VMFL, and GLFT…YYIG.

The protein belongs to the ATPase A chain family. F-type ATPases have 2 components, CF(1) - the catalytic core - and CF(0) - the membrane proton channel. CF(1) has five subunits: alpha(3), beta(3), gamma(1), delta(1), epsilon(1). CF(0) has four main subunits: a, b, b' and c.

The protein localises to the cellular thylakoid membrane. Its function is as follows. Key component of the proton channel; it plays a direct role in the translocation of protons across the membrane. This chain is ATP synthase subunit a, found in Prochlorococcus marinus subsp. pastoris (strain CCMP1986 / NIES-2087 / MED4).